Reading from the N-terminus, the 637-residue chain is Transcription factor PHYTOCHROME INTERACTING FACTOR-LIKE 15 (637 aa).

The span at Phe35–Ser46 shows a compositional bias: gly residues. Disordered stretches follow at residues Phe35–Gln54, Ala146–Met213, and Glu356–Arg397. Residues Pro149–Arg170 show a composition bias toward polar residues. A basic motif region spans residues Arg384–Arg397. A compositionally biased stretch (basic and acidic residues) spans Arg384–Arg397. Residues Arg384–Leu433 enclose the bHLH domain. The segment at Asp398–Leu433 is helix-loop-helix motif. Residues Gly601 to Thr637 form a disordered region. Polar residues predominate over residues Ile608–Asp621. Residues Asn628–Thr637 are compositionally biased toward basic and acidic residues.

It belongs to the bHLH protein family. Interacts with LF and PRR1.

Its subcellular location is the nucleus. In terms of biological role, transcription factor that may act as negative regulator of phyB-dependent light signal transduction. The chain is Transcription factor PHYTOCHROME INTERACTING FACTOR-LIKE 15 from Oryza sativa subsp. japonica (Rice).